A 181-amino-acid polypeptide reads, in one-letter code: TATA-box-binding protein (181 aa).

2 consecutive repeat copies span residues 7 to 83 (IVNV…MEYL) and 98 to 173 (VQNM…KNTV).

This sequence belongs to the TBP family.

Its function is as follows. General factor that plays a role in the activation of archaeal genes transcribed by RNA polymerase. Binds specifically to the TATA box promoter element which lies close to the position of transcription initiation. The sequence is that of TATA-box-binding protein from Methanococcus aeolicus (strain ATCC BAA-1280 / DSM 17508 / OCM 812 / Nankai-3).